The following is a 534-amino-acid chain: Dolichol kinase (534 aa).

The Cytoplasmic portion of the chain corresponds to 1 to 16 (MTRQCPPQESGAALSG). The helical transmembrane segment at 17-37 (SVLAEAAVVFAVVLSIHAAVW) threads the bilayer. The Extracellular segment spans residues 38–72 (DRYSWCAVALAVQAFYVQYKWDRLLQQGNAVFQFR). Residues 73 to 93 (MSANSGLLPASMVMPLLGLVM) traverse the membrane as a helical segment. Topologically, residues 94–109 (KERCQTAGNPYFERFG) are cytoplasmic. Residues 110-130 (IVVAATGMAVALFSSVLALGI) traverse the membrane as a helical segment. Residues 131 to 132 (TR) are Extracellular-facing. The chain crosses the membrane as a helical span at residues 133–153 (PVPTNTCAISGLAGGVIIYIM). Topologically, residues 154–161 (RHSLSVGE) are cytoplasmic. The chain crosses the membrane as a helical span at residues 162–182 (VIEVLEVLLIFVYLNMILLYL). The Extracellular portion of the chain corresponds to 183 to 186 (LPRC). The chain crosses the membrane as a helical span at residues 187-207 (FTPGEALLVLGGISFVLNQLI). The Cytoplasmic segment spans residues 208 to 220 (KRSLTESQGDPVD). The chain crosses the membrane as a helical span at residues 221 to 241 (FFLLVVVVGMVLMGVFFSTLF). At 242–252 (VFMDSGTWASS) the chain is on the extracellular side. The chain crosses the membrane as a helical span at residues 253–273 (IFFHLMTCVLGLGVVLPWLHW). The Cytoplasmic portion of the chain corresponds to 274–293 (LIRRNPLLWLLQFLFYTETR). A helical membrane pass occupies residues 294–314 (IYLLAYWSLLASVACLVVLYQ). Residues 315–333 (NAKRSSSESKKHRAPTITR) lie on the Extracellular side of the membrane. A helical transmembrane segment spans residues 334–350 (KYFHFIVVATYIPGIIF). Over 351 to 355 (DRPLL) the chain is Cytoplasmic. The chain crosses the membrane as a helical span at residues 356 to 376 (YVAATVCLAVFIFLEYVRYFR). Over 377 to 397 (IKPLGHTLRSLLSLFLDERDS) the chain is Extracellular. The helical transmembrane segment at 398-418 (GPLILTHIYLLLGMSLPIWLI) threads the bilayer. Topologically, residues 419 to 432 (PRPCTQKDSLEGAR) are cytoplasmic. Residues 433–453 (ALVPYAGVLAVGVGDTVASIF) form a helical membrane-spanning segment. Over 454-468 (GSTMGEIRWPGTKKT) the chain is Extracellular. The interval 455–470 (STMGEIRWPGTKKTFE) is CTP-binding. A helical membrane pass occupies residues 469-489 (FEGTMTSIFAQIISVALILIF). Residues 490-491 (DS) lie on the Cytoplasmic side of the membrane. Residues 492 to 512 (GVDLNYSYAWILGSISTVSLL) traverse the membrane as a helical segment. The Extracellular portion of the chain corresponds to 513–534 (EAYTTQIDNLLLPLYLLILLMA).

The protein belongs to the polyprenol kinase family.

The protein resides in the endoplasmic reticulum membrane. The catalysed reaction is a di-trans,poly-cis-dolichol + CTP = a di-trans,poly-cis-dolichyl phosphate + CDP + H(+). It participates in protein modification; protein glycosylation. Catalyzes CTP-mediated phosphorylation of dolichol, the terminal step in de novo dolichyl monophosphate (Dol-P) biosynthesis. Dol-P is a lipid carrier essential for the synthesis of N-linked and O-linked oligosaccharides and for GPI anchors. The chain is Dolichol kinase from Mus musculus (Mouse).